The chain runs to 209 residues: MTAIERFLSTCTTPEIAVSLLGKQLRLQTSSGVLTAWITETEAYLGARDAGAHAYQNHQTPRNHALWQSAGTIYIYQMRAWCLLNIVTQAAGTPECVLIRGIEPDAGLERMQQQRPVPIANLTNGPGKLMQALGLDKTLNGQALQPATLSLDLSHYRQPEQVVATPRIGIVNKGEWTTAPLRYFVAGNPFVSKISRRTIDHEHHGWMTR.

This sequence belongs to the DNA glycosylase MPG family.

This is Putative 3-methyladenine DNA glycosylase from Lactiplantibacillus plantarum (strain ATCC BAA-793 / NCIMB 8826 / WCFS1) (Lactobacillus plantarum).